A 429-amino-acid chain; its full sequence is Ribosomal RNA small subunit methyltransferase B (429 aa).

Residues 254–260 (CAGPGGK), Asp277, Asp303, and Asp322 each bind S-adenosyl-L-methionine. Catalysis depends on Cys375, which acts as the Nucleophile.

The protein belongs to the class I-like SAM-binding methyltransferase superfamily. RsmB/NOP family.

It is found in the cytoplasm. It carries out the reaction cytidine(967) in 16S rRNA + S-adenosyl-L-methionine = 5-methylcytidine(967) in 16S rRNA + S-adenosyl-L-homocysteine + H(+). In terms of biological role, specifically methylates the cytosine at position 967 (m5C967) of 16S rRNA. The sequence is that of Ribosomal RNA small subunit methyltransferase B from Escherichia coli O6:K15:H31 (strain 536 / UPEC).